Reading from the N-terminus, the 224-residue chain is Transcriptional regulatory protein CiaR (224 aa).

The 114-residue stretch at 3–116 (KILLVEDDLG…ELKMRIQALL (114 aa)) folds into the Response regulatory domain. Asp-51 carries the post-translational modification 4-aspartylphosphate. Positions 124 to 222 (ENTLTYGNIV…LRSVGYLLKD (99 aa)) form a DNA-binding region, ompR/PhoB-type.

Phosphorylated by CiaH.

The protein resides in the cytoplasm. Functionally, member of the two-component regulatory system CiaH/CiaR. Involved in early steps of competence regulation and in penicillin susceptibility. The polypeptide is Transcriptional regulatory protein CiaR (ciaR) (Streptococcus pneumoniae (strain ATCC BAA-255 / R6)).